Consider the following 404-residue polypeptide: Starvation-sensing protein RspA (404 aa).

Belongs to the mandelate racemase/muconate lactonizing enzyme family.

Functionally, probably involved in the degradation of homoserine lactone (HSL) or of a metabolite of HSL that signals starvation. In Escherichia coli (strain K12), this protein is Starvation-sensing protein RspA.